The chain runs to 634 residues: DNA gyrase subunit B (634 aa).

Residues 1–220 (MSYDASAIRV…EEVFLDKGGV (220 aa)) are ATPase domain. The segment at 221 to 390 (ASFAKALAEG…EAARKARELV (170 aa)) is transducer domain. The Toprim domain maps to 416–534 (AELFIVEGDS…RGHVYIAQPP (119 aa)). Residues Glu-422, Asp-499, and Asp-501 each coordinate Mg(2+).

This sequence belongs to the type II topoisomerase GyrB family. Heterotetramer, composed of two GyrA and two GyrB chains. Non-hydrolyzable ATP analogs induce dimerization, novobiocin also induces a small amount of dimerization. The two subunits form an intertwined dimer where the GyrB ATPase transducer helix of 1 subunit connects to the Toprim domain of the other GyrB subunit through a 10 residue linker. In the heterotetramer, GyrA contains the active site tyrosine that forms a covalent intermediate with the DNA, while GyrB binds cofactors and catalyzes ATP hydrolysis. It depends on Mg(2+) as a cofactor. Mn(2+) is required as a cofactor. The cofactor is Ca(2+).

Its subcellular location is the cytoplasm. The enzyme catalyses ATP-dependent breakage, passage and rejoining of double-stranded DNA.. A type II topoisomerase that negatively supercoils closed circular double-stranded (ds) DNA in an ATP-dependent manner. It probably also catalyzes the interconversion of other topological isomers of double-stranded DNA rings, including catenanes. Relaxes negatively supercoiled DNA in an ATP-independent manner. At comparable concentrations T.thermophilus gyrase does not introduce as many negative supercoils into DNA as the E.coli enzyme. Functionally, negative supercoiling favors strand separation, and DNA replication, transcription, recombination and repair, all of which involve strand separation. Type II topoisomerases break and join 2 DNA strands simultaneously in an ATP-dependent manner. This chain is DNA gyrase subunit B, found in Thermus thermophilus (strain ATCC 27634 / DSM 579 / HB8).